We begin with the raw amino-acid sequence, 138 residues long: MGRDTIADIITSIRNVDMNRKGTVRIESTNMAEKIVKILLREGFIENVRKHQENKKSFLVLTLRHRRNRKGPSPSRTFLNLNLKRISRPGLRVYSNYQKIPRILGGMGIVILSTSRGIMTDREARLEGIGGEILCYIW.

The protein belongs to the universal ribosomal protein uS8 family. In terms of assembly, part of the 30S ribosomal subunit.

It is found in the plastid. Its subcellular location is the chloroplast. One of the primary rRNA binding proteins, it binds directly to 16S rRNA central domain where it helps coordinate assembly of the platform of the 30S subunit. This is Small ribosomal subunit protein uS8c (rps8) from Oenothera elata subsp. hookeri (Hooker's evening primrose).